The primary structure comprises 245 residues: Thiopurine S-methyltransferase (245 aa).

29–40 (WQEKWVNHKTGF) provides a ligand contact to S-adenosyl-L-methionine. F40 is a binding site for substrate. K58 is subject to N6-acetyllysine. Residues L69, E90, and R152 each contribute to the S-adenosyl-L-methionine site.

It belongs to the class I-like SAM-binding methyltransferase superfamily. TPMT family. As to quaternary structure, monomer.

It is found in the cytoplasm. The enzyme catalyses S-adenosyl-L-methionine + a thiopurine = S-adenosyl-L-homocysteine + a thiopurine S-methylether.. This is Thiopurine S-methyltransferase (TPMT) from Bos taurus (Bovine).